Here is a 568-residue protein sequence, read N- to C-terminus: Sphingosine-1-phosphate lyase 1 (568 aa).

The Lumenal segment spans residues 1–40; the sequence is MPSTDLLMLKAFEPYLEILEVYSTKAKNYVNGHCTKYEPW. A helical; Signal-anchor for type III membrane protein transmembrane segment spans residues 41–61; it reads QLIAWSVVWTLLIVWGYEFVF. Residues 62-568 are Cytoplasmic-facing; the sequence is QPESLWSRFK…SQMNGSPKPH (507 aa). The residue at position 353 (lysine 353) is an N6-(pyridoxal phosphate)lysine; alternate. Position 353 is an N6-acetyllysine; alternate (lysine 353). 3'-nitrotyrosine occurs at positions 356 and 366. Phosphoserine is present on serine 564.

The protein belongs to the group II decarboxylase family. Sphingosine-1-phosphate lyase subfamily. Homodimer. The cofactor is pyridoxal 5'-phosphate. Ubiquitously expressed. Expressed in fetal and adult adrenal gland (at protein level).

The protein localises to the endoplasmic reticulum membrane. It carries out the reaction sphinganine 1-phosphate = hexadecanal + phosphoethanolamine. The enzyme catalyses sphing-4-enine 1-phosphate = (2E)-hexadecenal + phosphoethanolamine. The protein operates within lipid metabolism; sphingolipid metabolism. Cleaves phosphorylated sphingoid bases (PSBs), such as sphingosine-1-phosphate, into fatty aldehydes and phosphoethanolamine. Elevates stress-induced ceramide production and apoptosis. Required for global lipid homeostasis in liver and cholesterol homeostasis in fibroblasts. Involved in the regulation of pro-inflammatory response and neutrophil trafficking. Modulates neuronal autophagy via phosphoethanolamine production which regulates accumulation of aggregate-prone proteins such as APP. Seems to play a role in establishing neuronal contact sites and axonal maintenance. The sequence is that of Sphingosine-1-phosphate lyase 1 from Homo sapiens (Human).